Reading from the N-terminus, the 747-residue chain is Elongation factor G, mitochondrial (747 aa).

A mitochondrion-targeting transit peptide spans 1–32 (MTLITRVLNGNLPLRLSTLKAARQLQCGYSSH). Residues 42 to 319 (ERIRNIGISA…AVVDYLPNPG (278 aa)) enclose the tr-type G domain. GTP contacts are provided by residues 51-58 (AHIDSGKT), 118-122 (DTPGH), and 172-175 (NKLD).

Belongs to the TRAFAC class translation factor GTPase superfamily. Classic translation factor GTPase family. EF-G/EF-2 subfamily.

The protein localises to the mitochondrion. It functions in the pathway protein biosynthesis; polypeptide chain elongation. Its function is as follows. Mitochondrial GTPase that catalyzes the GTP-dependent ribosomal translocation step during translation elongation. During this step, the ribosome changes from the pre-translocational (PRE) to the post-translocational (POST) state as the newly formed A-site-bound peptidyl-tRNA and P-site-bound deacylated tRNA move to the P and E sites, respectively. Catalyzes the coordinated movement of the two tRNA molecules, the mRNA and conformational changes in the ribosome. Essential during development as it acts as a retrograde signal from mitochondria to the nucleus to slow down cell proliferation if mitochondrial energy output is low. The polypeptide is Elongation factor G, mitochondrial (Drosophila mojavensis (Fruit fly)).